Here is a 399-residue protein sequence, read N- to C-terminus: Phospholipase C (399 aa).

The N-terminal stretch at 1–28 (MNKKKILKFICSAVLSFTLFSGYKSYAW) is a signal peptide. Zn(2+) is bound by residues Trp28, His38, Asp83, His95, His153, Asp157, His163, His175, and Glu179. Residues 29-277 (DGKVDGTGTH…NEVSGTINTT (249 aa)) enclose the Zn-dependent PLC domain. The linker stretch occupies residues 275 to 282 (NTTENSKI). In terms of domain architecture, PLAT spans 283–399 (NEIMVVIKTA…DNKTFYINNK (117 aa)). Gly298, Thr299, Asp300, Asp320, Asn321, Gly323, Asn324, Asp325, and Asp363 together coordinate Ca(2+).

This sequence belongs to the bacterial zinc-metallophospholipase C family. Ca(2+) serves as cofactor. Zn(2+) is required as a cofactor.

The protein resides in the secreted. It carries out the reaction a 1,2-diacyl-sn-glycero-3-phosphocholine + H2O = phosphocholine + a 1,2-diacyl-sn-glycerol + H(+). Functionally, bacterial hemolysins are exotoxins that attack blood cell membranes and cause cell rupture. Binds to eukaryotic membranes where it hydrolyzes phosphatidylcholine, sphingomyelin and phosphatidylethanolamine. The diacylglycerol produced can activate both the arachidonic acid pathway, leading to modulation of the inflammatory response cascade and thrombosis, and protein kinase C, leading to activation of eukaryotic phospholipases and further membrane damage. The sequence is that of Phospholipase C (plc) from Clostridium haemolyticum.